A 266-amino-acid chain; its full sequence is Tryptophan synthase alpha chain (266 aa).

Catalysis depends on proton acceptor residues Glu-47 and Asp-58.

This sequence belongs to the TrpA family. In terms of assembly, tetramer of two alpha and two beta chains.

The protein localises to the plastid. It is found in the chloroplast. The enzyme catalyses (1S,2R)-1-C-(indol-3-yl)glycerol 3-phosphate + L-serine = D-glyceraldehyde 3-phosphate + L-tryptophan + H2O. The protein operates within amino-acid biosynthesis; L-tryptophan biosynthesis; L-tryptophan from chorismate: step 5/5. Its function is as follows. The alpha subunit is responsible for the aldol cleavage of indoleglycerol phosphate to indole and glyceraldehyde 3-phosphate. This chain is Tryptophan synthase alpha chain, found in Cyanidium caldarium (Red alga).